The sequence spans 347 residues: MSSDISEKIQQARRDAESMKEQIRANRDVMNDTTLKTFTRDLPGLPKMEGKIKVRRNLKGHLAKIYAMHWAEDNVHLVSASQDGKLLVWDGLTTNKVHAIPLRSSWVMTCAYSPTANFVACGGLDNICSIYNLRSREQPIRVCRELNSHTGYLSCCRFLNDRQIVTSSGDMTCILWDVENGTKITEFSDHNGDVMSVSVSPDKNYFISGACDATAKLWDLRSGKCVQTFTGHEADINAVQYFPNGLSFGTGSDDASCRLFDIRADRELMQYTHDNILCGITSVGFSFSGRFLFAGYDDFTCNVWDTLKGERVLSLTGHGNRVSCLGVPTDGMALCTGSWDSLLKIWA.

WD repeat units lie at residues 60–90 (GHLA…LVWD), 102–132 (LRSS…SIYN), 148–177 (SHTG…ILWD), 189–219 (DHNG…KLWD), 231–261 (GHEA…RLFD), 275–305 (NILC…NVWD), and 317–347 (GHGN…KIWA).

The protein belongs to the WD repeat G protein beta family. As to quaternary structure, g proteins are composed of 3 units, alpha, beta and gamma. Interacts with gpgA, and this requires phlp1.

The protein localises to the cytoplasm. It is found in the cell membrane. Its function is as follows. Guanine nucleotide-binding proteins (G proteins) are involved as a modulator or transducer in various transmembrane signaling systems. The beta and gamma chains are required for the GTPase activity, for replacement of GDP by GTP, and for G protein-effector interaction. Required for normal chemotaxis in response to cAMP and for aggregation during scorocarp development. The sequence is that of Guanine nucleotide-binding protein subunit beta (gpbA) from Dictyostelium discoideum (Social amoeba).